The primary structure comprises 711 residues: Polyribonucleotide nucleotidyltransferase (711 aa).

The Mg(2+) site is built by Asp-486 and Asp-492. One can recognise a KH domain in the interval 553-612 (PRIHTIKINPDKIKDVIGKGGSVIRALTEETGTTIEIEDDGTVKIAATDGEKAKHAIRRI). An S1 motif domain is found at 622–690 (GRVYTGKVTR…RQGRIRLSIK (69 aa)). The segment at 689 to 711 (IKEATEQSQPAAAPEAPAAEQGE) is disordered. A compositionally biased stretch (low complexity) spans 694–711 (EQSQPAAAPEAPAAEQGE).

It belongs to the polyribonucleotide nucleotidyltransferase family. Component of the RNA degradosome, which is a multiprotein complex involved in RNA processing and mRNA degradation. The cofactor is Mg(2+).

Its subcellular location is the cytoplasm. The catalysed reaction is RNA(n+1) + phosphate = RNA(n) + a ribonucleoside 5'-diphosphate. Involved in mRNA degradation. Catalyzes the phosphorolysis of single-stranded polyribonucleotides processively in the 3'- to 5'-direction. In Shigella flexneri serotype 5b (strain 8401), this protein is Polyribonucleotide nucleotidyltransferase.